Consider the following 594-residue polypeptide: Pentatricopeptide repeat-containing protein At1g15480, mitochondrial (594 aa).

A mitochondrion-targeting transit peptide spans 1–67 (MFALSKVLRR…WSSSTGRRSL (67 aa)). Residues 62-75 (TGRRSLSSDAGAKT) show a composition bias toward low complexity. A disordered region spans residues 62–109 (TGRRSLSSDAGAKTTGDDDDLEDKNVDLATPDETSSDSEDGEEFSGDE). Positions 95–109 (TSSDSEDGEEFSGDE) are enriched in acidic residues. 7 PPR repeats span residues 226–260 (GELV…GFPL), 261–294 (STFT…NLKP), 295–329 (NLNT…GVEL), 330–364 (DLRA…SLEE), 432–466 (SSNV…GCNI), 467–502 (GALT…QIKP), and 503–537 (LMSS…GYQS).

The protein belongs to the PPR family. P subfamily.

The protein resides in the mitochondrion. The chain is Pentatricopeptide repeat-containing protein At1g15480, mitochondrial from Arabidopsis thaliana (Mouse-ear cress).